A 427-amino-acid chain; its full sequence is Kallistatin (427 aa).

An N-terminal signal peptide occupies residues 1–20 (MHLIDYLLLLLVGLLALSHG). Residues asparagine 33, asparagine 108, asparagine 157, and asparagine 238 are each glycosylated (N-linked (GlcNAc...) asparagine).

The protein belongs to the serpin family. Monomer and some homodimers.

The protein localises to the secreted. In terms of biological role, inhibits human amidolytic and kininogenase activities of tissue kallikrein. The chain is Kallistatin (SERPINA4) from Pongo abelii (Sumatran orangutan).